The following is a 1068-amino-acid chain: Integrator complex subunit 3 homolog (1068 aa).

Disordered regions lie at residues 916–939 (YPSS…STPS) and 1001–1068 (VGRR…NDSD). Ser1038, Ser1039, Ser1043, and Ser1044 each carry phosphoserine.

This sequence belongs to the Integrator subunit 3 family. As to quaternary structure, belongs to the multiprotein complex Integrator, at least composed of IntS1, IntS2, IntS3, IntS4, omd/IntS5, IntS6, defl/IntS7, IntS8, IntS9, IntS10, IntS11, IntS12, asun/IntS13, IntS14 and IntS15. The core complex associates with protein phosphatase 2A subunits mts/PP2A and Pp2A-29B, to form the Integrator-PP2A (INTAC) complex.

It localises to the nucleus. The protein resides in the cytoplasm. Its function is as follows. Component of the integrator complex, a multiprotein complex that terminates RNA polymerase II (Pol II) transcription in the promoter-proximal region of genes. The integrator complex provides a quality checkpoint during transcription elongation by driving premature transcription termination of transcripts that are unfavorably configured for transcriptional elongation: the complex terminates transcription by (1) catalyzing dephosphorylation of the C-terminal domain (CTD) of Pol II subunit Polr2A/Rbp1 and Spt5, and (2) degrading the exiting nascent RNA transcript via endonuclease activity. The integrator complex is also involved in the 3'-end processing of the U7 snRNA, and also the spliceosomal snRNAs U1, U2, U4 and U5. The chain is Integrator complex subunit 3 homolog (IntS3) from Drosophila sechellia (Fruit fly).